Consider the following 161-residue polypeptide: 4-hydroxybenzoyl-CoA reductase subunit gamma (161 aa).

The 2Fe-2S ferredoxin-type domain occupies 3 to 79; that stretch reads NILRLTLNGR…GKKVETVESL (77 aa). Residues C41, C46, C49, C61, C100, C103, C135, and C137 each coordinate [2Fe-2S] cluster.

In terms of assembly, heterohexamer of two alpha, two beta and two gamma subunits. [2Fe-2S] cluster is required as a cofactor.

It catalyses the reaction oxidized 2[4Fe-4S]-[ferredoxin] + benzoyl-CoA + H2O = 4-hydroxybenzoyl-CoA + reduced 2[4Fe-4S]-[ferredoxin] + 2 H(+). Inactivated by low concentrations of cyanide in vitro. In terms of biological role, component of a complex that catalyzes the reductive dehydroxylation of 4-hydroxybenzoyl-CoA to benzoyl-CoA. Reaction is not reversible. Is a key enzyme in the anaerobic degradation of phenolic compounds. The polypeptide is 4-hydroxybenzoyl-CoA reductase subunit gamma (hcrC) (Thauera aromatica).